Here is a 1238-residue protein sequence, read N- to C-terminus: Cryptic loci regulator protein 1 (1238 aa).

6 disordered regions span residues Thr-133–Asn-156, Pro-196–Ile-237, Ala-277–Met-303, Gln-546–Thr-568, Ser-696–His-735, and Thr-784–Ser-824. Residues Asn-214–Ala-223 show a composition bias toward polar residues. Positions Ser-224 to Ile-237 are enriched in low complexity. Positions Ser-291–Met-303 are enriched in polar residues. Residues Ser-702–Asn-723 are compositionally biased toward low complexity. Basic and acidic residues predominate over residues Leu-785–Lys-796. The span at Asn-810–Glu-819 shows a compositional bias: polar residues. The segment at Leu-1062–His-1087 adopts a C2H2-type zinc-finger fold.

Interacts with clr3.

It localises to the nucleus. The protein localises to the chromosome. Its subcellular location is the centromere. The protein resides in the telomere. In terms of biological role, regulates silencing of the mat2 and mat3 loci. Organizes the chromatin structure of the mating-type region where it also participates in establishing the 'cold spot' for recombination. Required for proper positioning of nucleosomes at heterochromatic loci and for transcriptional gene silencing (TGS) function of the Snf2/Hdac-containing repressor complex (SHREC). The protein is Cryptic loci regulator protein 1 (clr1) of Schizosaccharomyces pombe (strain 972 / ATCC 24843) (Fission yeast).